Here is a 446-residue protein sequence, read N- to C-terminus: Nuclear envelope morphology protein 1 (446 aa).

The disordered stretch occupies residues Val-53–Lys-80. Residues Gln-56–Asn-75 are compositionally biased toward basic and acidic residues. A helical membrane pass occupies residues Ile-87–Leu-103. Residues His-132–Leu-168 form a disordered region. Over residues Gly-139–Asp-156 the composition is skewed to polar residues. The FCP1 homology domain maps to Asn-247–Met-424.

Belongs to the Dullard family. In terms of assembly, component of the NEM1-SPO7 complex.

The protein localises to the endoplasmic reticulum membrane. It is found in the nucleus membrane. The enzyme catalyses O-phospho-L-seryl-[protein] + H2O = L-seryl-[protein] + phosphate. It carries out the reaction O-phospho-L-threonyl-[protein] + H2O = L-threonyl-[protein] + phosphate. Catalytic component of the NEM1-SPO7 complex which acts as a phosphatase and dephosphorylates the phosphatidic acid phosphohydrolase PAH1. Essential for the formation of a spherical nucleus and meiotic division. The NEM1-SPOo7 protein phosphatase is required for efficient mitophagy under prolonged respiration, as well as for reticulophagy and pexophagy. The protein is Nuclear envelope morphology protein 1 (NEM1) of Saccharomyces cerevisiae (strain ATCC 204508 / S288c) (Baker's yeast).